A 58-amino-acid chain; its full sequence is uncharacterized protein (58 aa).

The protein resides in the plastid. Its subcellular location is the chloroplast. This is an uncharacterized protein from Pyropia yezoensis (Susabi-nori).